We begin with the raw amino-acid sequence, 271 residues long: Ribosome-recycling factor, chloroplastic (271 aa).

The N-terminal 78 residues, methionine 1–cysteine 78, are a transit peptide targeting the chloroplast. Residues alanine 213–isoleucine 260 adopt a coiled-coil conformation.

This sequence belongs to the RRF family. As to quaternary structure, modeling onto the 70S ribosome suggests it binds to PSRP1. Restricted to photosynthetic tissues.

It localises to the plastid. It is found in the chloroplast stroma. Its function is as follows. Responsible for the release of ribosomes from messenger RNA at the termination of chloroplastic protein biosynthesis. The sequence is that of Ribosome-recycling factor, chloroplastic (RRF) from Spinacia oleracea (Spinach).